The sequence spans 155 residues: Transcriptional repressor NrdR (155 aa).

Residues 3 to 34 (CPFCGNIDTQVKDSRPAEDHVSIRRRRFCPAC) fold into a zinc finger. Positions 49–139 (LVVIKSTGKR…VYKNFQAADD (91 aa)) constitute an ATP-cone domain.

Belongs to the NrdR family. It depends on Zn(2+) as a cofactor.

Negatively regulates transcription of bacterial ribonucleotide reductase nrd genes and operons by binding to NrdR-boxes. This Roseobacter denitrificans (strain ATCC 33942 / OCh 114) (Erythrobacter sp. (strain OCh 114)) protein is Transcriptional repressor NrdR.